Reading from the N-terminus, the 463-residue chain is Dipeptidyl peptidase 1 (463 aa).

Residues 1–24 (MGVGPASLLAALLLLLSGDRAVRC) form the signal peptide. N-linked (GlcNAc...) asparagine glycans are attached at residues asparagine 29, asparagine 53, and asparagine 119. 5 disulfide bridges follow: cysteine 30–cysteine 118, cysteine 54–cysteine 136, cysteine 255–cysteine 298, cysteine 291–cysteine 331, and cysteine 321–cysteine 337. Positions 135-230 (ACFTGKKVGT…TAEIQQKILH (96 aa)) are excised as a propeptide. Cysteine 258 is an active-site residue. The N-linked (GlcNAc...) asparagine glycan is linked to asparagine 276. Chloride contacts are provided by phenylalanine 302 and tyrosine 304. Tyrosine 347 contacts chloride. Residues histidine 405 and asparagine 427 contribute to the active site.

The protein belongs to the peptidase C1 family. As to quaternary structure, tetramer of heterotrimers consisting of exclusion domain, heavy- and light chains. Chloride is required as a cofactor.

It localises to the lysosome. The enzyme catalyses Release of an N-terminal dipeptide, Xaa-Yaa-|-Zaa-, except when Xaa is Arg or Lys, or Yaa or Zaa is Pro.. In terms of biological role, thiol protease. Has dipeptidylpeptidase activity. Active against a broad range of dipeptide substrates composed of both polar and hydrophobic amino acids. Proline cannot occupy the P1 position and arginine cannot occupy the P2 position of the substrate. Can act as both an exopeptidase and endopeptidase. Activates serine proteases such as elastase, cathepsin G and granzymes A and B. The chain is Dipeptidyl peptidase 1 (CTSC) from Macaca fascicularis (Crab-eating macaque).